Consider the following 226-residue polypeptide: 2-dehydro-3-deoxy-phosphogluconate aldolase (226 aa).

Catalysis depends on glutamate 57, which acts as the Proton acceptor. Residues arginine 61, threonine 85, and lysine 145 each coordinate pyruvate. Lysine 145 serves as the catalytic Schiff-base intermediate with substrate.

It belongs to the KHG/KDPG aldolase family. Homotrimer.

The catalysed reaction is 2-dehydro-3-deoxy-6-phospho-D-gluconate = D-glyceraldehyde 3-phosphate + pyruvate. It participates in carbohydrate acid metabolism; 2-dehydro-3-deoxy-D-gluconate degradation; D-glyceraldehyde 3-phosphate and pyruvate from 2-dehydro-3-deoxy-D-gluconate: step 2/2. Its function is as follows. Involved in the degradation of glucose via the Entner-Doudoroff pathway. Catalyzes the reversible, stereospecific retro-aldol cleavage of 2-keto-3-deoxy-6-phosphogluconate (KDPG) to pyruvate and D-glyceraldehyde-3-phosphate. The sequence is that of 2-dehydro-3-deoxy-phosphogluconate aldolase from Pseudomonas putida (Arthrobacter siderocapsulatus).